A 152-amino-acid chain; its full sequence is Large ribosomal subunit protein bL9 (152 aa).

Belongs to the bacterial ribosomal protein bL9 family.

Binds to the 23S rRNA. The protein is Large ribosomal subunit protein bL9 of Synechococcus sp. (strain RCC307).